The primary structure comprises 98 residues: NADH-ubiquinone oxidoreductase chain 4L (98 aa).

3 helical membrane-spanning segments follow: residues 1 to 21 (MSLIHINIFLAFTVSLMGLLM), 29 to 49 (SLLCLEGMMLSLFIMATMMVL), and 61 to 81 (IILLVFAACEAALGLSLLVMI).

Belongs to the complex I subunit 4L family. In terms of assembly, core subunit of respiratory chain NADH dehydrogenase (Complex I) which is composed of 45 different subunits.

It localises to the mitochondrion inner membrane. It catalyses the reaction a ubiquinone + NADH + 5 H(+)(in) = a ubiquinol + NAD(+) + 4 H(+)(out). Functionally, core subunit of the mitochondrial membrane respiratory chain NADH dehydrogenase (Complex I) which catalyzes electron transfer from NADH through the respiratory chain, using ubiquinone as an electron acceptor. Part of the enzyme membrane arm which is embedded in the lipid bilayer and involved in proton translocation. The polypeptide is NADH-ubiquinone oxidoreductase chain 4L (MT-ND4L) (Rhinoceros unicornis (Greater Indian rhinoceros)).